A 38-amino-acid polypeptide reads, in one-letter code: Photosystem I reaction center subunit VIII (38 aa).

The helical transmembrane segment at 12 to 32 threads the bilayer; that stretch reads WILIPIIGWLMPAVVMGLLFL.

It belongs to the PsaI family.

It is found in the cellular thylakoid membrane. In terms of biological role, may help in the organization of the PsaL subunit. The sequence is that of Photosystem I reaction center subunit VIII from Gloeothece citriformis (strain PCC 7424) (Cyanothece sp. (strain PCC 7424)).